Here is a 100-residue protein sequence, read N- to C-terminus: Urease subunit gamma (100 aa).

Belongs to the urease gamma subunit family. In terms of assembly, heterotrimer of UreA (gamma), UreB (beta) and UreC (alpha) subunits. Three heterotrimers associate to form the active enzyme.

It is found in the cytoplasm. The enzyme catalyses urea + 2 H2O + H(+) = hydrogencarbonate + 2 NH4(+). Its pathway is nitrogen metabolism; urea degradation; CO(2) and NH(3) from urea (urease route): step 1/1. The sequence is that of Urease subunit gamma from Escherichia coli O157:H7 (strain EC4115 / EHEC).